A 386-amino-acid chain; its full sequence is Cytochrome b (386 aa).

The next 4 membrane-spanning stretches (helical) occupy residues 32–52 (LGSL…FLAM), 76–98 (YLIR…AHIG), 113–133 (VWVI…LGYC), and 179–199 (FFAL…MHLM). Heme b-binding residues include histidine 82 and histidine 96. 2 residues coordinate heme b: histidine 183 and histidine 197. Histidine 202 is an a ubiquinone binding site. 4 consecutive transmembrane segments (helical) span residues 225-245 (FVFK…LFVF), 289-309 (LGGV…PVTD), 321-341 (ISKT…QLGQ), and 348-368 (FIQL…FIVP).

This sequence belongs to the cytochrome b family. As to quaternary structure, fungal cytochrome b-c1 complex contains 10 subunits; 3 respiratory subunits, 2 core proteins and 5 low-molecular weight proteins. Cytochrome b-c1 complex is a homodimer. Heme b is required as a cofactor.

The protein localises to the mitochondrion inner membrane. In terms of biological role, component of the ubiquinol-cytochrome c reductase complex (complex III or cytochrome b-c1 complex) that is part of the mitochondrial respiratory chain. The b-c1 complex mediates electron transfer from ubiquinol to cytochrome c. Contributes to the generation of a proton gradient across the mitochondrial membrane that is then used for ATP synthesis. In Wickerhamomyces canadensis (Yeast), this protein is Cytochrome b (COB).